The chain runs to 334 residues: Fructose-1,6-bisphosphatase class 1 (334 aa).

Positions 92, 114, 116, and 117 each coordinate Mg(2+). Residues 117–120 and asparagine 209 each bind substrate; that span reads DGSS. Residue glutamate 281 coordinates Mg(2+).

It belongs to the FBPase class 1 family. As to quaternary structure, homotetramer. The cofactor is Mg(2+).

Its subcellular location is the cytoplasm. The catalysed reaction is beta-D-fructose 1,6-bisphosphate + H2O = beta-D-fructose 6-phosphate + phosphate. Its pathway is carbohydrate biosynthesis; gluconeogenesis. This Nitrosomonas europaea (strain ATCC 19718 / CIP 103999 / KCTC 2705 / NBRC 14298) protein is Fructose-1,6-bisphosphatase class 1.